Reading from the N-terminus, the 468-residue chain is Putrescine aminotransferase (468 aa).

Pyridoxal 5'-phosphate is bound by residues 150–151 (GT) and Gln274. The residue at position 300 (Lys300) is an N6-(pyridoxal phosphate)lysine. Thr332 is a binding site for pyridoxal 5'-phosphate.

The protein belongs to the class-III pyridoxal-phosphate-dependent aminotransferase family. Putrescine aminotransferase subfamily. Pyridoxal 5'-phosphate serves as cofactor.

It catalyses the reaction an alkane-alpha,omega-diamine + 2-oxoglutarate = an omega-aminoaldehyde + L-glutamate. The enzyme catalyses putrescine + 2-oxoglutarate = 1-pyrroline + L-glutamate + H2O. The catalysed reaction is cadaverine + 2-oxoglutarate = 5-aminopentanal + L-glutamate. The protein operates within amine and polyamine degradation; putrescine degradation; 4-aminobutanal from putrescine (transaminase route): step 1/1. Functionally, catalyzes the aminotransferase reaction from putrescine to 2-oxoglutarate, leading to glutamate and 4-aminobutanal, which spontaneously cyclizes to form 1-pyrroline. This is the first step in one of two pathways for putrescine degradation, where putrescine is converted into 4-aminobutanoate (gamma-aminobutyrate or GABA) via 4-aminobutanal. Also functions as a cadaverine transaminase in a a L-lysine degradation pathway to succinate that proceeds via cadaverine, glutarate and L-2-hydroxyglutarate. This is Putrescine aminotransferase from Pectobacterium atrosepticum (strain SCRI 1043 / ATCC BAA-672) (Erwinia carotovora subsp. atroseptica).